A 524-amino-acid polypeptide reads, in one-letter code: Probable aminopeptidase NPEPL1 (524 aa).

Residues lysine 260 and aspartate 265 each contribute to the Zn(2+) site. Lysine 272 is an active-site residue. Zn(2+) is bound by residues aspartate 283, aspartate 342, and glutamate 344. Arginine 346 is a catalytic residue.

It belongs to the peptidase M17 family. It depends on Zn(2+) as a cofactor. Mn(2+) serves as cofactor.

Probably catalyzes the removal of unsubstituted N-terminal amino acids from various peptides. The chain is Probable aminopeptidase NPEPL1 (Npepl1) from Mus musculus (Mouse).